Here is a 198-residue protein sequence, read N- to C-terminus: NAD(P)H quinone oxidoreductase PST1 (198 aa).

The 187-residue stretch at 6-192 (VAIIIYSLYH…AIAKQQGEDF (187 aa)) folds into the Flavodoxin-like domain. Residues 12–16 (SLYHH) and 112–164 (VFVW…SPWG) each bind FMN.

It belongs to the WrbA family. It depends on FMN as a cofactor.

It localises to the cell membrane. The enzyme catalyses a quinone + NADH + H(+) = a quinol + NAD(+). It catalyses the reaction a quinone + NADPH + H(+) = a quinol + NADP(+). Flavodoxin-like protein (FLP) that plays a role in cell wall integrity, oxidative stress protection and virulence. FLPs act as NAD(P)H quinone oxidoreductases. Reduces ubiquinone (coenzyme Q), enabling it to serve as an antioxidant in the membrane. The sequence is that of NAD(P)H quinone oxidoreductase PST1 from Candida albicans (strain SC5314 / ATCC MYA-2876) (Yeast).